Consider the following 299-residue polypeptide: DNA-binding transcriptional repressor CapW (299 aa).

The interval 1-84 is winged HTH domain; sequence MESSGSSKVR…EFKPITKRSE (84 aa). The WYL domain stretch occupies residues 85–196; it reads ATRYLNELQR…IGRLDVLEHV (112 aa). The WYL domain maps to 120 to 200; the sequence is SRAIEADEVA…DVLEHVFSAK (81 aa). The interval 145–189 is probable ligand-binding region; sequence YQSMDAPEPQEWVLSPHALGFDGLRWHARAWCHARQVFRDFAIGR. Residues 197–299 form a WCX domain region; it reads FSAKPVDPLL…DRDGLQHLRR (103 aa).

As to quaternary structure, homodimer.

Transcriptional regulator of a CBASS antivirus system. CBASS (cyclic oligonucleotide-based antiphage signaling system) provides immunity against bacteriophage. The CD-NTase protein synthesizes cyclic nucleotides in response to infection; these serve as specific second messenger signals. The signals activate a diverse range of effectors, leading to bacterial cell death and thus abortive phage infection. A type III CBASS system, part of a CapW-Cap6-Cap8-Cap7-CdnC-NucC locus. Binds specifically to palindromes that overlap the -10 site in the promoter of cap6, found beween found between the genes for divergently transcribed capW and cap6 (cognate DNA). Probably represses transcription bidirectionally from the promoter. Mutations that make it a constitutive repressor in E.coli do not change DNA-binding affinity. The polypeptide is DNA-binding transcriptional repressor CapW (Stenotrophomonas maltophilia (Pseudomonas maltophilia)).